Reading from the N-terminus, the 159-residue chain is Dihydrofolate reductase (159 aa).

Positions 1-158 (MISLIAALAV…HSYCFEILER (158 aa)) constitute a DHFR domain. Residue Ile-5 coordinates substrate. Residues Ala-7 and 13 to 19 (VIGMENA) contribute to the NADP(+) site. Residue Asp-27 participates in substrate binding. 45–46 (HT) contributes to the NADP(+) binding site. Positions 52 and 57 each coordinate substrate. NADP(+)-binding positions include 63–64 (SS), Lys-76, and 95–102 (GGGRVYEQ). Position 113 (Thr-113) interacts with substrate.

This sequence belongs to the dihydrofolate reductase family.

The catalysed reaction is (6S)-5,6,7,8-tetrahydrofolate + NADP(+) = 7,8-dihydrofolate + NADPH + H(+). Its pathway is cofactor biosynthesis; tetrahydrofolate biosynthesis; 5,6,7,8-tetrahydrofolate from 7,8-dihydrofolate: step 1/1. Its function is as follows. Key enzyme in folate metabolism. Catalyzes an essential reaction for de novo glycine and purine synthesis, and for DNA precursor synthesis. This is Dihydrofolate reductase (folA) from Escherichia coli O6:H1 (strain CFT073 / ATCC 700928 / UPEC).